The primary structure comprises 326 residues: tRNA-modifying protein YgfZ (326 aa).

Residues Trp27 and Trp189 each coordinate folate.

This sequence belongs to the tRNA-modifying YgfZ family.

It localises to the cytoplasm. Folate-binding protein involved in regulating the level of ATP-DnaA and in the modification of some tRNAs. It is probably a key factor in regulatory networks that act via tRNA modification, such as initiation of chromosomal replication. This chain is tRNA-modifying protein YgfZ, found in Escherichia coli O6:H1 (strain CFT073 / ATCC 700928 / UPEC).